The following is a 430-amino-acid chain: 3-phosphoshikimate 1-carboxyvinyltransferase (430 aa).

Residues Lys-21, Ser-22, and Arg-26 each contribute to the 3-phosphoshikimate site. Lys-21 is a phosphoenolpyruvate binding site. Positions 94 and 122 each coordinate phosphoenolpyruvate. 3-phosphoshikimate is bound by residues Ser-167, Gln-169, Asp-317, and Lys-344. Phosphoenolpyruvate is bound at residue Gln-169. Catalysis depends on Asp-317, which acts as the Proton acceptor. Phosphoenolpyruvate-binding residues include Arg-348 and Arg-390.

Belongs to the EPSP synthase family. In terms of assembly, monomer.

Its subcellular location is the cytoplasm. It carries out the reaction 3-phosphoshikimate + phosphoenolpyruvate = 5-O-(1-carboxyvinyl)-3-phosphoshikimate + phosphate. Its pathway is metabolic intermediate biosynthesis; chorismate biosynthesis; chorismate from D-erythrose 4-phosphate and phosphoenolpyruvate: step 6/7. Catalyzes the transfer of the enolpyruvyl moiety of phosphoenolpyruvate (PEP) to the 5-hydroxyl of shikimate-3-phosphate (S3P) to produce enolpyruvyl shikimate-3-phosphate and inorganic phosphate. In Thermodesulfovibrio yellowstonii (strain ATCC 51303 / DSM 11347 / YP87), this protein is 3-phosphoshikimate 1-carboxyvinyltransferase.